The following is a 734-amino-acid chain: Ribosomal RNA large subunit methyltransferase K/L (734 aa).

A THUMP domain is found at His-49–Leu-167.

This sequence belongs to the methyltransferase superfamily. RlmKL family.

It localises to the cytoplasm. The enzyme catalyses guanosine(2445) in 23S rRNA + S-adenosyl-L-methionine = N(2)-methylguanosine(2445) in 23S rRNA + S-adenosyl-L-homocysteine + H(+). It catalyses the reaction guanosine(2069) in 23S rRNA + S-adenosyl-L-methionine = N(2)-methylguanosine(2069) in 23S rRNA + S-adenosyl-L-homocysteine + H(+). Functionally, specifically methylates the guanine in position 2445 (m2G2445) and the guanine in position 2069 (m7G2069) of 23S rRNA. This Acinetobacter baumannii (strain SDF) protein is Ribosomal RNA large subunit methyltransferase K/L.